The primary structure comprises 292 residues: 2-dehydro-3-deoxygalactonokinase (292 aa).

Belongs to the DgoK family.

It catalyses the reaction 2-dehydro-3-deoxy-D-galactonate + ATP = 2-dehydro-3-deoxy-6-phospho-D-galactonate + ADP + H(+). Its pathway is carbohydrate acid metabolism; D-galactonate degradation; D-glyceraldehyde 3-phosphate and pyruvate from D-galactonate: step 2/3. The protein is 2-dehydro-3-deoxygalactonokinase (dgoK) of Escherichia coli (strain K12).